The following is a 234-amino-acid chain: Ribose-5-phosphate isomerase A (234 aa).

Substrate is bound by residues 34 to 37 (TGST), 90 to 93 (DGAD), and 103 to 106 (KGGG). Residue glutamate 112 is the Proton acceptor of the active site. Lysine 130 provides a ligand contact to substrate.

The protein belongs to the ribose 5-phosphate isomerase family. In terms of assembly, homodimer.

It catalyses the reaction aldehydo-D-ribose 5-phosphate = D-ribulose 5-phosphate. The protein operates within carbohydrate degradation; pentose phosphate pathway; D-ribose 5-phosphate from D-ribulose 5-phosphate (non-oxidative stage): step 1/1. Functionally, catalyzes the reversible conversion of ribose-5-phosphate to ribulose 5-phosphate. This Methanosarcina acetivorans (strain ATCC 35395 / DSM 2834 / JCM 12185 / C2A) protein is Ribose-5-phosphate isomerase A.